Here is a 373-residue protein sequence, read N- to C-terminus: NADH-quinone oxidoreductase subunit D (373 aa).

The protein belongs to the complex I 49 kDa subunit family. As to quaternary structure, NDH-1 is composed of 14 different subunits. Subunits NuoB, C, D, E, F, and G constitute the peripheral sector of the complex.

It is found in the cell inner membrane. The enzyme catalyses a quinone + NADH + 5 H(+)(in) = a quinol + NAD(+) + 4 H(+)(out). Its function is as follows. NDH-1 shuttles electrons from NADH, via FMN and iron-sulfur (Fe-S) centers, to quinones in the respiratory chain. The immediate electron acceptor for the enzyme in this species is believed to be ubiquinone. Couples the redox reaction to proton translocation (for every two electrons transferred, four hydrogen ions are translocated across the cytoplasmic membrane), and thus conserves the redox energy in a proton gradient. This Syntrophobacter fumaroxidans (strain DSM 10017 / MPOB) protein is NADH-quinone oxidoreductase subunit D.